Here is a 476-residue protein sequence, read N- to C-terminus: Bifunctional protein HldE (476 aa).

Residues 1–318 (MLSKKPNILV…EYESSLHKSN (318 aa)) are ribokinase. ATP is bound at residue 195–198 (NKKE). Aspartate 263 is a catalytic residue. The cytidylyltransferase stretch occupies residues 345–476 (FTNGCFDILH…RIQENEKCNN (132 aa)).

The protein in the N-terminal section; belongs to the carbohydrate kinase PfkB family. This sequence in the C-terminal section; belongs to the cytidylyltransferase family. As to quaternary structure, homodimer.

It carries out the reaction D-glycero-beta-D-manno-heptose 7-phosphate + ATP = D-glycero-beta-D-manno-heptose 1,7-bisphosphate + ADP + H(+). The catalysed reaction is D-glycero-beta-D-manno-heptose 1-phosphate + ATP + H(+) = ADP-D-glycero-beta-D-manno-heptose + diphosphate. It functions in the pathway nucleotide-sugar biosynthesis; ADP-L-glycero-beta-D-manno-heptose biosynthesis; ADP-L-glycero-beta-D-manno-heptose from D-glycero-beta-D-manno-heptose 7-phosphate: step 1/4. It participates in nucleotide-sugar biosynthesis; ADP-L-glycero-beta-D-manno-heptose biosynthesis; ADP-L-glycero-beta-D-manno-heptose from D-glycero-beta-D-manno-heptose 7-phosphate: step 3/4. Functionally, catalyzes the phosphorylation of D-glycero-D-manno-heptose 7-phosphate at the C-1 position to selectively form D-glycero-beta-D-manno-heptose-1,7-bisphosphate. In terms of biological role, catalyzes the ADP transfer from ATP to D-glycero-beta-D-manno-heptose 1-phosphate, yielding ADP-D-glycero-beta-D-manno-heptose. This chain is Bifunctional protein HldE, found in Aliarcobacter butzleri (strain RM4018) (Arcobacter butzleri).